The primary structure comprises 106 residues: ATP-dependent Clp protease adapter protein ClpS (106 aa).

This sequence belongs to the ClpS family. In terms of assembly, binds to the N-terminal domain of the chaperone ClpA.

Its function is as follows. Involved in the modulation of the specificity of the ClpAP-mediated ATP-dependent protein degradation. In Vibrio parahaemolyticus serotype O3:K6 (strain RIMD 2210633), this protein is ATP-dependent Clp protease adapter protein ClpS.